Reading from the N-terminus, the 411-residue chain is Small ribosomal subunit protein bS1c (411 aa).

A chloroplast-targeting transit peptide spans Met1–Ser41. S1 motif domains follow at residues Gly96–Arg166, Asp184–Arg248, and Gly261–Lys329.

The protein belongs to the bacterial ribosomal protein bS1 family. As to quaternary structure, component of the chloroplast small ribosomal subunit (SSU). Mature 70S chloroplast ribosomes of higher plants consist of a small (30S) and a large (50S) subunit. The 30S small subunit contains 1 molecule of ribosomal RNA (16S rRNA) and 24 different proteins. The 50S large subunit contains 3 rRNA molecules (23S, 5S and 4.5S rRNA) and 33 different proteins.

The protein resides in the plastid. It is found in the chloroplast. In terms of biological role, component of the chloroplast ribosome (chloro-ribosome), a dedicated translation machinery responsible for the synthesis of chloroplast genome-encoded proteins, including proteins of the transcription and translation machinery and components of the photosynthetic apparatus. Actively engaged in the initiation complex formation via a strong mRNA-binding activity. Possesses a poly(A)-binding activity which might play a role as a control element in chloroplast mRNA translation. In Spinacia oleracea (Spinach), this protein is Small ribosomal subunit protein bS1c (RPS1).